We begin with the raw amino-acid sequence, 182 residues long: Ribosome-recycling factor (182 aa).

It belongs to the RRF family.

The protein localises to the cytoplasm. Its function is as follows. Responsible for the release of ribosomes from messenger RNA at the termination of protein biosynthesis. May increase the efficiency of translation by recycling ribosomes from one round of translation to another. The polypeptide is Ribosome-recycling factor (Nostoc sp. (strain PCC 7120 / SAG 25.82 / UTEX 2576)).